The primary structure comprises 553 residues: Urocanate hydratase (553 aa).

NAD(+)-binding positions include 45–46, Gln-123, 169–171, Asp-189, Arg-194, 235–236, 256–260, 266–267, Tyr-315, and Gly-485; these read GG, GMG, NA, QTSAH, and YV.

The protein belongs to the urocanase family. It depends on NAD(+) as a cofactor.

The protein localises to the cytoplasm. The enzyme catalyses 4-imidazolone-5-propanoate = trans-urocanate + H2O. Its pathway is amino-acid degradation; L-histidine degradation into L-glutamate; N-formimidoyl-L-glutamate from L-histidine: step 2/3. Catalyzes the conversion of urocanate to 4-imidazolone-5-propionate. The chain is Urocanate hydratase from Staphylococcus aureus (strain COL).